The chain runs to 272 residues: Phosphate import ATP-binding protein PstB (272 aa).

In terms of domain architecture, ABC transporter spans 26–267 (LEIRNLDLRY…PKKRKTEDYI (242 aa)). Residue 58 to 65 (GPSGCGKS) participates in ATP binding.

The protein belongs to the ABC transporter superfamily. Phosphate importer (TC 3.A.1.7) family. As to quaternary structure, the complex is composed of two ATP-binding proteins (PstB), two transmembrane proteins (PstC and PstA) and a solute-binding protein (PstS).

The protein resides in the cell inner membrane. The enzyme catalyses phosphate(out) + ATP + H2O = ADP + 2 phosphate(in) + H(+). Part of the ABC transporter complex PstSACB involved in phosphate import. Responsible for energy coupling to the transport system. The sequence is that of Phosphate import ATP-binding protein PstB from Shewanella frigidimarina (strain NCIMB 400).